The sequence spans 416 residues: Thioredoxin domain-containing protein 5 homolog (416 aa).

The first 25 residues, 1-25 (MLTRSILSVAVCGLLLSPLLPITRA), serve as a signal peptide directing secretion. 3 Thioredoxin domains span residues 26–145 (SQEE…KELS), 150–272 (ADLG…KMVG), and 293–412 (AGEE…KFLG). 3 cysteine pairs are disulfide-bonded: C65/C68, C194/C197, and C331/C334. The Prevents secretion from ER motif lies at 413 to 416 (HDEL).

The protein belongs to the protein disulfide isomerase family.

It localises to the endoplasmic reticulum. It is found in the cell surface. Its function is as follows. Possesses thioredoxin activity. Acts as a ligand for Drpr and is required for the phagocytosis of apoptotic cells. Binds to the extracellular region of Drpr and augments Drpr tyrosine phosphorylation. The protein is Thioredoxin domain-containing protein 5 homolog of Drosophila melanogaster (Fruit fly).